The sequence spans 372 residues: Delta-type opioid receptor (372 aa).

At 1 to 47 the chain is on the extracellular side; sequence MEPVPSARAELQFSLLANVSDTFPSAFPSASANASGSPGARSASSLA. N-linked (GlcNAc...) asparagine glycans are attached at residues Asn18 and Asn33. Residues 48-75 form a helical membrane-spanning segment; sequence LAIAITALYSAVCAVGLLGNVLVMFGIV. Residues 76 to 85 lie on the Cytoplasmic side of the membrane; that stretch reads RYTKLKTATN. Residues 86–110 traverse the membrane as a helical segment; that stretch reads IYIFNLALADALATSTLPFQSAKYL. At 111–122 the chain is on the extracellular side; that stretch reads METWPFGELLCK. Cys121 and Cys198 are disulfide-bonded. The helical transmembrane segment at 123–144 threads the bilayer; that stretch reads AVLSIDYYNMFTSIFTLTMMSV. At 145–163 the chain is on the cytoplasmic side; that stretch reads DRYIAVCHPVKALDFRTPA. The helical transmembrane segment at 164–186 threads the bilayer; it reads KAKLINICIWVLASGVGVPIMVM. At 187–206 the chain is on the extracellular side; the sequence is AVTQPRDGAVVCTLQFPSPS. Residues 207–238 form a helical membrane-spanning segment; sequence WYWDTVTKICVFLFAFVVPILIITVCYGLMLL. Over 239 to 261 the chain is Cytoplasmic; sequence RLRSVRLLSGSKEKDRSLRRITR. Residues 262 to 284 form a helical membrane-spanning segment; it reads MVLVVVGAFVVCWAPIHIFVIVW. Over 285-299 the chain is Extracellular; that stretch reads TLVDINRRDPLVVAA. The chain crosses the membrane as a helical span at residues 300 to 321; sequence LHLCIALGYANSSLNPVLYAFL. Residues 322-372 are Cytoplasmic-facing; sequence DENFKRCFRQLCRAPCGGQEPGSLRRPRQATARERVTACTPSDGPGGGAAA. Cys333 carries S-palmitoyl cysteine lipidation. The segment at 340-372 is disordered; that stretch reads QEPGSLRRPRQATARERVTACTPSDGPGGGAAA.

It belongs to the G-protein coupled receptor 1 family. In terms of assembly, may form homooligomers. Forms a heterodimer with OPRM1. Interacts with GPRASP1. Interacts with RTP4; the interaction promotes cell surface localization of the OPRD1-OPRM1 heterodimer. In terms of processing, ubiquitinated. A basal ubiquitination seems not to be related to degradation. Ubiquitination is increased upon formation of OPRM1:OPRD1 oligomers leading to proteasomal degradation; the ubiquitination is diminished by RTP4. As to expression, detected in brain, brain stem and brain cortex.

It localises to the cell membrane. In terms of biological role, G-protein coupled receptor that functions as a receptor for endogenous enkephalins and for a subset of other opioids. Ligand binding causes a conformation change that triggers signaling via guanine nucleotide-binding proteins (G proteins) and modulates the activity of down-stream effectors, such as adenylate cyclase. Signaling leads to the inhibition of adenylate cyclase activity. Inhibits neurotransmitter release by reducing calcium ion currents and increasing potassium ion conductance. Plays a role in the perception of pain and in opiate-mediated analgesia. Plays a role in developing analgesic tolerance to morphine. The polypeptide is Delta-type opioid receptor (Oprd1) (Rattus norvegicus (Rat)).